Reading from the N-terminus, the 430-residue chain is Dihydrolipoyllysine-residue acetyltransferase component of pyruvate dehydrogenase complex (430 aa).

The Lipoyl-binding domain occupies 2-77 (AFEFRLPDIG…VVGDVIVKID (76 aa)). Lys-43 is modified (N6-lipoyllysine). The tract at residues 80–122 (DAEDMQFKGHDDDSSSKEEPAKEEAPAEQAPVATQTEEVDENR) is disordered. The span at 84–104 (MQFKGHDDDSSSKEEPAKEEA) shows a compositional bias: basic and acidic residues. In terms of domain architecture, Peripheral subunit-binding (PSBD) spans 125–162 (KAMPSVRKYAREKGVNIKAVSGSGKNGRITKEDVDAYL). The segment at 164–200 (GGAPTASNESADSATNEEVAETPAAPAAVSLEGDFPE) is disordered. Residues 177 to 192 (ATNEEVAETPAAPAAV) are compositionally biased toward low complexity. His-401 is a catalytic residue.

It belongs to the 2-oxoacid dehydrogenase family. As to quaternary structure, forms a 24-polypeptide structural core with octahedral symmetry. It depends on (R)-lipoate as a cofactor.

It carries out the reaction N(6)-[(R)-dihydrolipoyl]-L-lysyl-[protein] + acetyl-CoA = N(6)-[(R)-S(8)-acetyldihydrolipoyl]-L-lysyl-[protein] + CoA. Its function is as follows. The pyruvate dehydrogenase complex catalyzes the overall conversion of pyruvate to acetyl-CoA and CO(2). It contains multiple copies of three enzymatic components: pyruvate dehydrogenase (E1), dihydrolipoamide acetyltransferase (E2) and lipoamide dehydrogenase (E3). This is Dihydrolipoyllysine-residue acetyltransferase component of pyruvate dehydrogenase complex (pdhC) from Staphylococcus aureus.